Consider the following 627-residue polypeptide: Interferon-induced GTP-binding protein MxB (627 aa).

The Dynamin-type G domain occupies 34–307 (DLALPAIAVI…LVHHIQRSLP (274 aa)). The G1 motif stretch occupies residues 44–51 (GDQSSGKS). 44 to 51 (GDQSSGKS) is a GTP binding site. Residues 69–71 (VTR) form a G2 motif region. Residues 145–148 (DLPG) are G3 motif. GTP is bound by residues 145 to 149 (DLPGI) and 214 to 217 (TKPD). The interval 214–217 (TKPD) is G4 motif. Residues 246 to 249 (RCRG) are G5 motif. The GED domain maps to 541–627 (LSEMKLHLES…MKAQNLLATY (87 aa)).

It belongs to the TRAFAC class dynamin-like GTPase superfamily. Dynamin/Fzo/YdjA family.

The protein resides in the cytoplasm. The sequence is that of Interferon-induced GTP-binding protein MxB (mxb) from Danio rerio (Zebrafish).